Here is a 257-residue protein sequence, read N- to C-terminus: Ciliary microtubule associated protein 1B (257 aa).

3 STPGR repeats span residues 103 to 129, 182 to 207, and 218 to 243; these read PGPG…LSAR, PGPG…MTGR, and PGPG…FGIR.

It belongs to the CIMAP family.

It is found in the cell projection. Its subcellular location is the cilium. The protein localises to the flagellum. The chain is Ciliary microtubule associated protein 1B (cimap1b) from Danio rerio (Zebrafish).